Consider the following 75-residue polypeptide: Large ribosomal subunit protein uL24c (75 aa).

This sequence belongs to the universal ribosomal protein uL24 family. As to quaternary structure, part of the 50S ribosomal subunit.

It localises to the plastid. The protein localises to the chloroplast. Its function is as follows. One of two assembly initiator proteins, it binds directly to the 5'-end of the 23S rRNA, where it nucleates assembly of the 50S subunit. The protein is Large ribosomal subunit protein uL24c (rpl24) of Cyanidioschyzon merolae (strain NIES-3377 / 10D) (Unicellular red alga).